A 143-amino-acid polypeptide reads, in one-letter code: Transthyretin-like protein 33 (143 aa).

Positions 1-20 (MSRLACISSLFILCAIGSEA) are cleaved as a signal peptide.

Belongs to the nematode transthyretin-like family. As to expression, expressed in head cells next to and anterior of the first pharyngeal bulb, the pharynx, and the hypodermis.

The protein resides in the secreted. Protects dopaminergic neurons from degeneration caused by oxidative stress. This is Transthyretin-like protein 33 from Caenorhabditis elegans.